Reading from the N-terminus, the 665-residue chain is MPIHILPPQLANQIAAGEVVERPASVVKELVENSLDAGATRVDIDIDKGGSKLIRIRDNGSGIPKDELALALSRHATSKVHSLDDLEAILSFGFRGEALASISSVARLTLTSKTAEQTEAWQAHAEGSQMDVSLMPAAHPQGSTIEVVDLFFNTPARRRFLKSDKTEFTHIDEWLKRIAIVRTDIHFSLTHNGKLVRQYRAANTDIQMQQRLSQICGRAFAEQAITLACEHDGLSLEGYIQSPHDNSVTDTNYFYVNGRLVRDKLVNHAVRQAFAEHQWHQQPSYVLKLTLDPHQVDVNVHPAKHEVRFHQSRYVHDFILQALQSALAQFPAKGSQAEYDFEQDNGSLEATAASNPDNGLSPSRGHAEEGDFSNSVAYAANAASVHRGSTSSERKASAGVSQFGRIPSSQGDYQPQDNSRYTPKRYSTNAASTNTASNYSHSTSAPVSRQALEGYAQLLATPEIVSSSNQYVADKNQEFKDVNESGSTPKVAAMPAVLAGQYWVITQGECLRLLPLQAVRLWLRQKEISHKLPTGLVSQPLLMPVAVKADKHWGEILLERESLLRQLGLELTIRYQQLIIKKVPPYLRESQLAVLIPELLQWVEHQVPAIPALSAWLAKHGQKHEQSLTDTWEGFCLLSEPEQQVLLEKAKVLPWQAWLEESQSE.

Polar residues-rich tracts occupy residues 348–361 (LEATAASNPDNGLS) and 407–421 (PSSQGDYQPQDNSRY). Disordered stretches follow at residues 348-370 (LEATAASNPDNGLSPSRGHAEEG) and 385-445 (VHRG…STSA). A compositionally biased stretch (low complexity) spans 426–445 (YSTNAASTNTASNYSHSTSA).

It belongs to the DNA mismatch repair MutL/HexB family.

This protein is involved in the repair of mismatches in DNA. It is required for dam-dependent methyl-directed DNA mismatch repair. May act as a 'molecular matchmaker', a protein that promotes the formation of a stable complex between two or more DNA-binding proteins in an ATP-dependent manner without itself being part of a final effector complex. This is DNA mismatch repair protein MutL from Shewanella denitrificans (strain OS217 / ATCC BAA-1090 / DSM 15013).